The chain runs to 265 residues: Thiazole synthase (265 aa).

Catalysis depends on Lys-107, which acts as the Schiff-base intermediate with DXP. 1-deoxy-D-xylulose 5-phosphate is bound by residues Gly-168, 194–195 (AG), and 216–217 (NT).

It belongs to the ThiG family. In terms of assembly, homotetramer. Forms heterodimers with either ThiH or ThiS.

The protein localises to the cytoplasm. It carries out the reaction [ThiS sulfur-carrier protein]-C-terminal-Gly-aminoethanethioate + 2-iminoacetate + 1-deoxy-D-xylulose 5-phosphate = [ThiS sulfur-carrier protein]-C-terminal Gly-Gly + 2-[(2R,5Z)-2-carboxy-4-methylthiazol-5(2H)-ylidene]ethyl phosphate + 2 H2O + H(+). It functions in the pathway cofactor biosynthesis; thiamine diphosphate biosynthesis. Functionally, catalyzes the rearrangement of 1-deoxy-D-xylulose 5-phosphate (DXP) to produce the thiazole phosphate moiety of thiamine. Sulfur is provided by the thiocarboxylate moiety of the carrier protein ThiS. In vitro, sulfur can be provided by H(2)S. The chain is Thiazole synthase from Pseudomonas paraeruginosa (strain DSM 24068 / PA7) (Pseudomonas aeruginosa (strain PA7)).